The sequence spans 198 residues: Large ribosomal subunit protein uL13 (198 aa).

The protein belongs to the universal ribosomal protein uL13 family.

The sequence is that of Large ribosomal subunit protein uL13 (RPL13A) from Tetrahymena thermophila (strain SB210).